The chain runs to 563 residues: Arginine--tRNA ligase (563 aa).

The 'HIGH' region motif lies at 122-132 (PNIAKPISMGH).

It belongs to the class-I aminoacyl-tRNA synthetase family. In terms of assembly, monomer.

It is found in the cytoplasm. The catalysed reaction is tRNA(Arg) + L-arginine + ATP = L-arginyl-tRNA(Arg) + AMP + diphosphate. In Enterococcus faecalis (strain ATCC 700802 / V583), this protein is Arginine--tRNA ligase.